The sequence spans 785 residues: Cadherin-7 (785 aa).

The N-terminal stretch at 1–27 is a signal peptide; it reads MKLGKVEFCHFLQLIALFLCFSGMSQA. The propeptide occupies 28 to 47; sequence ELSRSRSKPYFQSGRSRTKR. Over 28–607 the chain is Extracellular; it reads ELSRSRSKPY…AYVLPAGLST (580 aa). 5 consecutive Cadherin domains span residues 49–153, 154–262, 263–377, 378–482, and 482–599; these read WVWN…EPKF, LDGP…PPRF, PRRS…PPVF, SSPL…APEF, and FAMD…AEAY. Residues N449 and N530 are each glycosylated (N-linked (GlcNAc...) asparagine). The helical transmembrane segment at 608–628 threads the bilayer; it reads GALIAILACVLTLLVLILLIV. The Cytoplasmic segment spans residues 629-785; that stretch reads TMRRRKKEPL…YGTGQESLYS (157 aa).

The protein localises to the cell membrane. Its function is as follows. Cadherins are calcium-dependent cell adhesion proteins. They preferentially interact with themselves in a homophilic manner in connecting cells; cadherins may thus contribute to the sorting of heterogeneous cell types. The chain is Cadherin-7 (CDH7) from Homo sapiens (Human).